Consider the following 122-residue polypeptide: Insulin-like growth factor 1 (122 aa).

Positions 49–77 (GPETLCGAELVDALQFVCGDRGFYFNKPT) are b. 3 disulfides stabilise this stretch: Cys-54–Cys-96, Cys-66–Cys-109, and Cys-95–Cys-100. The segment at 78–89 (GYGSSSRRAPQT) is c. An a region spans residues 90–110 (GIVDECCFRSCDLRRLEMYCA). The d stretch occupies residues 111–118 (PLKPAKSA). The propeptide at 119–122 (RSVR) is e peptide.

This sequence belongs to the insulin family. In terms of assembly, forms a ternary complex with IGFR1 and ITGAV:ITGB3. Forms a ternary complex with IGFR1 and ITGA6:ITGB4. Forms a ternary complex with IGFBP3 and ALS.

The protein resides in the secreted. In terms of biological role, the insulin-like growth factors, isolated from plasma, are structurally and functionally related to insulin but have a much higher growth-promoting activity. May be a physiological regulator of [1-14C]-2-deoxy-D-glucose (2DG) transport and glycogen synthesis in osteoblasts. Stimulates glucose transport in bone-derived osteoblastic (PyMS) cells and is effective at much lower concentrations than insulin, not only regarding glycogen and DNA synthesis but also with regard to enhancing glucose uptake. May play a role in synapse maturation. Ca(2+)-dependent exocytosis of IGF1 is required for sensory perception of smell in the olfactory bulb. Acts as a ligand for IGF1R. Binds to the alpha subunit of IGF1R, leading to the activation of the intrinsic tyrosine kinase activity which autophosphorylates tyrosine residues in the beta subunit thus initiating a cascade of down-stream signaling events leading to activation of the PI3K-AKT/PKB and the Ras-MAPK pathways. Binds to integrins ITGAV:ITGB3 and ITGA6:ITGB4. Its binding to integrins and subsequent ternary complex formation with integrins and IGFR1 are essential for IGF1 signaling. Induces the phosphorylation and activation of IGFR1, MAPK3/ERK1, MAPK1/ERK2 and AKT1. As part of the MAPK/ERK signaling pathway, acts as a negative regulator of apoptosis in cardiomyocytes via promotion of STUB1/CHIP-mediated ubiquitination and degradation of ICER-type isoforms of CREM. This Equus caballus (Horse) protein is Insulin-like growth factor 1.